Consider the following 148-residue polypeptide: UPF0756 membrane protein YeaL (148 aa).

Transmembrane regions (helical) follow at residues 14–34, 51–71, 86–106, and 121–141; these read ALGF…LIIV, LTVG…SGTL, LVAI…VALM, and VLGV…AGLV.

The protein belongs to the UPF0756 family.

The protein localises to the cell membrane. The chain is UPF0756 membrane protein YeaL from Salmonella arizonae (strain ATCC BAA-731 / CDC346-86 / RSK2980).